The following is a 1333-amino-acid chain: Vascular endothelial growth factor receptor 1 (1333 aa).

A signal peptide spans 1–22 (MVSCWDTAVLPYALLGCLLLTG). Topologically, residues 23-759 (YGSGSKLKVP…QGTSDKSNLE (737 aa)) are extracellular. Ig-like C2-type domains lie at 32–124 (PELS…AESS), 152–215 (GRQL…VNGH), 231–328 (LDVQ…TSVH), 334–429 (FISV…NVKP), 430–550 (QIYE…RNIK), 557–656 (PNGF…EVLV), and 662–748 (PHLL…AYLT). Disulfide bonds link cysteine 53–cysteine 108 and cysteine 159–cysteine 208. N-linked (GlcNAc...) asparagine glycosylation is found at asparagine 101, asparagine 165, asparagine 197, and asparagine 252. Cysteine 253 and cysteine 312 form a disulfide bridge. 8 N-linked (GlcNAc...) asparagine glycosylation sites follow: asparagine 324, asparagine 418, asparagine 475, asparagine 517, asparagine 598, asparagine 626, asparagine 667, and asparagine 714. 2 cysteine pairs are disulfide-bonded: cysteine 455/cysteine 536 and cysteine 578/cysteine 637. Cysteine 683 and cysteine 732 are disulfide-bonded. The helical transmembrane segment at 760-781 (LITLTCTCVAATLFWLLLTLFI) threads the bilayer. The Cytoplasmic segment spans residues 782–1333 (RKLKRSSSEV…SVVLYSSPPA (552 aa)). Positions 828-1158 (LKLGKSLGRG…ELVEKLGDLL (331 aa)) constitute a Protein kinase domain. Residues 834–842 (LGRGAFGKV) and lysine 862 contribute to the ATP site. Tyrosine 915 bears the Phosphotyrosine; by autocatalysis mark. Residues 947–983 (EPGLEQGQKPRLDSVSSSSVTSSSFPEDRSVSDVEGD) form a disordered region. Residues 960 to 970 (SVSSSSVTSSS) are compositionally biased toward low complexity. Aspartate 1022 (proton acceptor) is an active-site residue. A phosphotyrosine; by autocatalysis mark is found at tyrosine 1053, tyrosine 1169, tyrosine 1213, tyrosine 1242, tyrosine 1322, and tyrosine 1328.

It belongs to the protein kinase superfamily. Tyr protein kinase family. CSF-1/PDGF receptor subfamily. Interacts with VEGFA, VEGFB and PGF. Monomer in the absence of bound VEGFA, VEGFB or PGF. Homodimer in the presence of bound VEGFA, VEGFB and PGF. Can also form a heterodimer with KDR. Interacts (tyrosine phosphorylated) with CBL, CRK, GRB2, NCK1, PIK3R1, PLCG, PSEN1 and PTPN11. Probably interacts with PTPRB. Interacts with RACK1. Identified in a complex with CBL and CD2AP. Post-translationally, N-glycosylated. In terms of processing, ubiquitinated after VEGFA-mediated autophosphorylation, leading to proteolytic degradation. Autophosphorylated on tyrosine residues upon ligand binding. Autophosphorylation occurs in trans, i.e. one subunit of the dimeric receptor phosphorylates tyrosine residues on the other subunit. Phosphorylation at Tyr-1169 is important for interaction with PLCG. Phosphorylation at Tyr-1213 is important for interaction with PIK3R1, PTPN11, GRB2, and PLCG. Phosphorylation at Tyr-1328 is important for endocytosis and for interaction with CBL, NCK1 and CRK. Is probably dephosphorylated by PTPRB.

It localises to the cell membrane. It is found in the endosome. The enzyme catalyses L-tyrosyl-[protein] + ATP = O-phospho-L-tyrosyl-[protein] + ADP + H(+). Its activity is regulated as follows. Present in an inactive conformation in the absence of bound ligand. Binding of VEGFA, VEGFB or PGF leads to dimerization and activation by autophosphorylation on tyrosine residues. Its function is as follows. Tyrosine-protein kinase that acts as a cell-surface receptor for VEGFA, VEGFB and PGF, and plays an essential role in the development of embryonic vasculature, the regulation of angiogenesis, cell survival, cell migration, macrophage function, chemotaxis, and cancer cell invasion. Acts as a positive regulator of postnatal retinal hyaloid vessel regression. May play an essential role as a negative regulator of embryonic angiogenesis by inhibiting excessive proliferation of endothelial cells. Can promote endothelial cell proliferation, survival and angiogenesis in adulthood. Its function in promoting cell proliferation seems to be cell-type specific. Promotes PGF-mediated proliferation of endothelial cells, and proliferation of some types of cancer cells, but does not promote proliferation of normal fibroblasts. Has very high affinity for VEGFA and relatively low protein kinase activity; may function as a negative regulator of VEGFA signaling by limiting the amount of free VEGFA and preventing its binding to KDR. Modulates KDR signaling by forming heterodimers with KDR. Ligand binding leads to the activation of several signaling cascades. Activation of PLCG leads to the production of the cellular signaling molecules diacylglycerol and inositol 1,4,5-trisphosphate and the activation of protein kinase C. Mediates phosphorylation of PIK3R1, the regulatory subunit of phosphatidylinositol 3-kinase, leading to the activation of phosphatidylinositol kinase and the downstream signaling pathway. Mediates activation of MAPK1/ERK2, MAPK3/ERK1 and the MAP kinase signaling pathway, as well as of the AKT1 signaling pathway. Phosphorylates SRC, YES1 and PLCG, and may also phosphorylate CBL. Promotes phosphorylation of AKT1 and PTK2/FAK1. This is Vascular endothelial growth factor receptor 1 (Flt1) from Mus musculus (Mouse).